The chain runs to 616 residues: Proline--tRNA ligase (616 aa).

It belongs to the class-II aminoacyl-tRNA synthetase family. ProS type 1 subfamily. As to quaternary structure, homodimer.

The protein localises to the cytoplasm. The enzyme catalyses tRNA(Pro) + L-proline + ATP = L-prolyl-tRNA(Pro) + AMP + diphosphate. Catalyzes the attachment of proline to tRNA(Pro) in a two-step reaction: proline is first activated by ATP to form Pro-AMP and then transferred to the acceptor end of tRNA(Pro). As ProRS can inadvertently accommodate and process non-cognate amino acids such as alanine and cysteine, to avoid such errors it has two additional distinct editing activities against alanine. One activity is designated as 'pretransfer' editing and involves the tRNA(Pro)-independent hydrolysis of activated Ala-AMP. The other activity is designated 'posttransfer' editing and involves deacylation of mischarged Ala-tRNA(Pro). The misacylated Cys-tRNA(Pro) is not edited by ProRS. The protein is Proline--tRNA ligase of Streptococcus gordonii (strain Challis / ATCC 35105 / BCRC 15272 / CH1 / DL1 / V288).